A 462-amino-acid chain; its full sequence is Fumarate hydratase class II (462 aa).

Residues 97–99, 128–131, 138–140, and Thr-186 contribute to the substrate site; these read SGT, HPND, and STN. Catalysis depends on His-187, which acts as the Proton donor/acceptor. Residue Ser-317 is part of the active site. Substrate-binding positions include Ser-318 and 323 to 325; that span reads KVN.

The protein belongs to the class-II fumarase/aspartase family. Fumarase subfamily. In terms of assembly, homotetramer.

Its subcellular location is the cytoplasm. It carries out the reaction (S)-malate = fumarate + H2O. It functions in the pathway carbohydrate metabolism; tricarboxylic acid cycle; (S)-malate from fumarate: step 1/1. Functionally, involved in the TCA cycle. Catalyzes the stereospecific interconversion of fumarate to L-malate. This Neisseria meningitidis serogroup A / serotype 4A (strain DSM 15465 / Z2491) protein is Fumarate hydratase class II.